The sequence spans 134 residues: ATP synthase epsilon chain (134 aa).

The protein belongs to the ATPase epsilon chain family. F-type ATPases have 2 components, CF(1) - the catalytic core - and CF(0) - the membrane proton channel. CF(1) has five subunits: alpha(3), beta(3), gamma(1), delta(1), epsilon(1). CF(0) has three main subunits: a, b and c.

Its subcellular location is the cell inner membrane. Produces ATP from ADP in the presence of a proton gradient across the membrane. This is ATP synthase epsilon chain from Nitratidesulfovibrio vulgaris (strain DSM 19637 / Miyazaki F) (Desulfovibrio vulgaris).